The following is a 136-amino-acid chain: Heme-binding protein Rv0203 (136 aa).

The signal sequence occupies residues 1-27 (MKTGTATTRRRLLAVLIALALPGAAVA). Cys-41 and Cys-115 are oxidised to a cystine. Heme contacts are provided by Tyr-60, His-64, and His-90.

In terms of assembly, dimer of dimers.

It localises to the secreted. In terms of biological role, part of a heme-iron acquisition system. Acts by binding heme and delivering it to the membrane proteins MmpL3 and MmpL11. Can use free heme or heme from host hemoglobin. The chain is Heme-binding protein Rv0203 from Mycobacterium tuberculosis (strain ATCC 25618 / H37Rv).